Reading from the N-terminus, the 91-residue chain is MNFFTMCMLAAGFGMAIGAFGTGIGQGLAVKSAVEGVSRNPGASGKILTTMMIGLAMIESLAIYVLVVCLIILFANPYKDVAIKALETVAK.

Helical transmembrane passes span 4–24 (FTMC…GTGI) and 53–73 (IGLA…LIIL).

Belongs to the ATPase C chain family. As to quaternary structure, F-type ATPases have 2 components, F(1) - the catalytic core - and F(0) - the membrane proton channel. F(1) has five subunits: alpha(3), beta(3), gamma(1), delta(1), epsilon(1). F(0) has three main subunits: a(1), b(2) and c(10-14). The alpha and beta chains form an alternating ring which encloses part of the gamma chain. F(1) is attached to F(0) by a central stalk formed by the gamma and epsilon chains, while a peripheral stalk is formed by the delta and b chains.

The protein resides in the cell inner membrane. Its function is as follows. F(1)F(0) ATP synthase produces ATP from ADP in the presence of a proton or sodium gradient. F-type ATPases consist of two structural domains, F(1) containing the extramembraneous catalytic core and F(0) containing the membrane proton channel, linked together by a central stalk and a peripheral stalk. During catalysis, ATP synthesis in the catalytic domain of F(1) is coupled via a rotary mechanism of the central stalk subunits to proton translocation. In terms of biological role, key component of the F(0) channel; it plays a direct role in translocation across the membrane. A homomeric c-ring of between 10-14 subunits forms the central stalk rotor element with the F(1) delta and epsilon subunits. The protein is ATP synthase subunit c of Trichlorobacter lovleyi (strain ATCC BAA-1151 / DSM 17278 / SZ) (Geobacter lovleyi).